A 388-amino-acid chain; its full sequence is STE20-related kinase adapter protein strd-1 (388 aa).

The 284-residue stretch at 52–335 folds into the Protein kinase domain; that stretch reads YDCVRYMGTC…ASDLKSSAWL (284 aa). Residues 58–66 and Lys-82 contribute to the ATP site; that span reads MGTCNGGQI.

It belongs to the protein kinase superfamily. STE Ser/Thr protein kinase family. STE20 subfamily. Interacts with sad-1. Interacts with par-4. In terms of tissue distribution, expressed in nervous system, pharynx and excretory canal. Expressed in germline.

It localises to the perikaryon. The protein localises to the nucleus. Its subcellular location is the cell projection. The protein resides in the dendrite. It is found in the axon. It localises to the synapse. The protein localises to the cytoplasm. Its subcellular location is the cell cortex. Functionally, pseudokinase which may act as an adapter for kinases sad-1 and par-4 and thereby is involved in several developmental processes. Regulates cell-autonomously both neuronal polarity and synaptic organization when bound to sad-1. Required for sad-1 localization to synapses. Required to establish germline stem cell (GSC) quiescence during dauer development, to promote cell shedding during embryogenesis and to control asymmetric cell division of the Q.p neuroblast lineage, probably when bound to par-4. May be involved in maintaining the integrity of the early embryonic cortex when bound to par-4. The sequence is that of STE20-related kinase adapter protein strd-1 from Caenorhabditis elegans.